The following is a 222-amino-acid chain: Thymidylate kinase (222 aa).

Residue 10–17 participates in ATP binding; that stretch reads GLEGAGKS.

Belongs to the thymidylate kinase family.

The catalysed reaction is dTMP + ATP = dTDP + ADP. In terms of biological role, phosphorylation of dTMP to form dTDP in both de novo and salvage pathways of dTTP synthesis. The chain is Thymidylate kinase from Alteromonas mediterranea (strain DSM 17117 / CIP 110805 / LMG 28347 / Deep ecotype).